We begin with the raw amino-acid sequence, 290 residues long: Zinc finger matrin-type protein 3 (290 aa).

2 Matrin-type zinc fingers span residues 70–100 (LFCKLCNVTLNSAQQAQAHYQGKNHGKKLRN) and 148–178 (DYCKLCDASFSSPAVAQAHYQGKNHAKRLRL). 2 disordered regions span residues 182–203 (QSHSFSDSAEAGQRRTRKEGSE) and 266–290 (ESKQHKSKVSEQRYRSEMENLGYVQ). Residues 246-276 (FYCSMCNVGAGEEVEFRQHLESKQHKSKVSE) form a Matrin-type 3 zinc finger. Residues 266–283 (ESKQHKSKVSEQRYRSEM) are compositionally biased toward basic and acidic residues.

As to quaternary structure, interacts with dsRNA. As to expression, constitutively expressed in brain and testis. Also expressed in lung, kidney and spleen after whole body gamma irradiation.

The protein resides in the nucleus. It is found in the nucleolus. Functionally, acts as a bona fide target gene of p53/TP53. May play a role in the TP53-dependent growth regulatory pathway. May contribute to TP53-mediated apoptosis by regulation of TP53 expression and translocation to the nucleus and nucleolus. This chain is Zinc finger matrin-type protein 3, found in Mus musculus (Mouse).